The sequence spans 155 residues: 6,7-dimethyl-8-ribityllumazine synthase (155 aa).

5-amino-6-(D-ribitylamino)uracil-binding positions include phenylalanine 23, 57–59 (AFE), and 81–83 (AVI). 86-87 (ST) contributes to the (2S)-2-hydroxy-3-oxobutyl phosphate binding site. Histidine 89 functions as the Proton donor in the catalytic mechanism. Phenylalanine 114 contacts 5-amino-6-(D-ribitylamino)uracil. (2S)-2-hydroxy-3-oxobutyl phosphate is bound at residue arginine 128.

It belongs to the DMRL synthase family.

It carries out the reaction (2S)-2-hydroxy-3-oxobutyl phosphate + 5-amino-6-(D-ribitylamino)uracil = 6,7-dimethyl-8-(1-D-ribityl)lumazine + phosphate + 2 H2O + H(+). It participates in cofactor biosynthesis; riboflavin biosynthesis; riboflavin from 2-hydroxy-3-oxobutyl phosphate and 5-amino-6-(D-ribitylamino)uracil: step 1/2. In terms of biological role, catalyzes the formation of 6,7-dimethyl-8-ribityllumazine by condensation of 5-amino-6-(D-ribitylamino)uracil with 3,4-dihydroxy-2-butanone 4-phosphate. This is the penultimate step in the biosynthesis of riboflavin. This is 6,7-dimethyl-8-ribityllumazine synthase from Trichlorobacter lovleyi (strain ATCC BAA-1151 / DSM 17278 / SZ) (Geobacter lovleyi).